Consider the following 111-residue polypeptide: Secreted transmembrane peptide 5 (111 aa).

The N-terminal stretch at 1 to 46 is a signal peptide; sequence MRLSVFYIFITRLAMTKNATKNEMGSKSPNIVALVLPLLLILYTLS. The SCOOP motif motif lies at 66 to 79; it reads IVWTPHSNSCGGSP. Residues 72 to 74 carry the SxS motif essential for MIK2 binding motif; it reads SNS. The segment at 89 to 111 is disordered; sequence TTGRPCRRSRPPGTNIPVSDQSP.

The protein belongs to the serine rich endogenous peptide (SCOOP) phytocytokine family. Interacts with MIK2 (via extracellular leucine-rich repeat domain); this interaction triggers the formation of complex between MIK2 and the BAK1/SERK3 and SERK4 coreceptors, and subsequent BAK1 activation by phosphorylation. As to expression, mostly expressed in leaves, and, to a lower extent, in roots, stems, siliques, seeds and flowers.

The protein localises to the cell membrane. Its subcellular location is the secreted. It is found in the extracellular space. It localises to the apoplast. In terms of biological role, brassicaceae-specific phytocytokine (plant endogenous peptide released into the apoplast) perceived by MIK2 in a BAK1/SERK3 and SERK4 coreceptors-dependent manner, that modulates various physiological and antimicrobial processes including growth prevention and reactive oxygen species (ROS) response regulation. The sequence is that of Secreted transmembrane peptide 5 from Arabidopsis thaliana (Mouse-ear cress).